Here is a 352-residue protein sequence, read N- to C-terminus: Protein MGF 360-9L (352 aa).

Belongs to the asfivirus MGF 360 family. Interacts with host STAT1; this interaction mediates STAT1 degradation through apoptosis. Interacts with host STAT2; this interaction mediates STAT2 degradation through the proteasome.

It is found in the host cytoplasm. Its function is as follows. Plays a role in virus cell tropism, and may be required for efficient virus replication in macrophages. In addition, inhibits IFN-beta-induced IFN-stimulated genes (ISGs) transcription. Mechanistically, degrades host STAT1 and STAT2 through apoptosis and ubiquitin-proteasome pathways respectively. The chain is Protein MGF 360-9L from Ornithodoros (relapsing fever ticks).